The sequence spans 430 residues: Tol-Pal system protein TolB (430 aa).

An N-terminal signal peptide occupies residues 1-21; the sequence is MKQAFRLMVGLLVLWASVLHA.

This sequence belongs to the TolB family. As to quaternary structure, the Tol-Pal system is composed of five core proteins: the inner membrane proteins TolA, TolQ and TolR, the periplasmic protein TolB and the outer membrane protein Pal. They form a network linking the inner and outer membranes and the peptidoglycan layer.

Its subcellular location is the periplasm. Functionally, part of the Tol-Pal system, which plays a role in outer membrane invagination during cell division and is important for maintaining outer membrane integrity. TolB occupies a key intermediary position in the Tol-Pal system because it communicates directly with both membrane-embedded components, Pal in the outer membrane and TolA in the inner membrane. This is Tol-Pal system protein TolB from Edwardsiella ictaluri (strain 93-146).